We begin with the raw amino-acid sequence, 404 residues long: Argininosuccinate synthase (404 aa).

Residues 10-18 (AYSGGLDTS) and A37 contribute to the ATP site. Y90 and S95 together coordinate L-citrulline. Residue G120 coordinates ATP. L-aspartate is bound by residues T122, N126, and D127. N126 contacts L-citrulline. L-citrulline contacts are provided by R130, S180, S189, E265, and Y277.

Belongs to the argininosuccinate synthase family. Type 1 subfamily. As to quaternary structure, homotetramer.

It localises to the cytoplasm. It carries out the reaction L-citrulline + L-aspartate + ATP = 2-(N(omega)-L-arginino)succinate + AMP + diphosphate + H(+). Its pathway is amino-acid biosynthesis; L-arginine biosynthesis; L-arginine from L-ornithine and carbamoyl phosphate: step 2/3. The protein is Argininosuccinate synthase of Helicobacter hepaticus (strain ATCC 51449 / 3B1).